The sequence spans 542 residues: Protein phosphatase 1G (542 aa).

Glycine 2 carries the N-myristoyl glycine lipid modification. At arginine 22 the chain carries Omega-N-methylarginine. A PPM-type phosphatase domain is found at 26 to 502 (PYGFSAMQGW…DNMTCIIICF (477 aa)). 2 residues coordinate Mn(2+): aspartate 60 and glycine 61. 2 disordered regions span residues 117-136 (IAGR…DEDD) and 164-325 (CQKV…SDSG). Phosphothreonine is present on threonine 122. Composition is skewed to acidic residues over residues 123–136 (EDED…DEDD) and 259–309 (DSED…DEEM). Lysine 380 carries the post-translational modification N6-acetyllysine. 2 residues coordinate Mn(2+): aspartate 438 and aspartate 493. The segment at 513–542 (ESGKRKLEEALSTEGAEDTGNSDKKKAKRD) is disordered. The residue at position 524 (serine 524) is a Phosphoserine.

This sequence belongs to the PP2C family. As to quaternary structure, interacts with NOL3; may dephosphorylate NOL3. It depends on Mg(2+) as a cofactor. The cofactor is Mn(2+). In terms of tissue distribution, highly expressed in testis. Low level of expression in kidney. Also expressed in a number of tissues undergoing proliferation including embryo, uterus at pregnancy, placenta, and ovaries.

The protein resides in the nucleus. It is found in the membrane. It catalyses the reaction O-phospho-L-seryl-[protein] + H2O = L-seryl-[protein] + phosphate. The enzyme catalyses O-phospho-L-threonyl-[protein] + H2O = L-threonyl-[protein] + phosphate. In terms of biological role, may be involved in regulation of cell cycle. The polypeptide is Protein phosphatase 1G (Ppm1g) (Mus musculus (Mouse)).